Consider the following 42-residue polypeptide: Kappa-actitoxin-Ael2a (42 aa).

3 disulfides stabilise this stretch: Cys4–Cys37, Cys6–Cys30, and Cys20–Cys38.

The protein belongs to the sea anemone type 3 (BDS) potassium channel toxin family.

Its subcellular location is the secreted. The protein resides in the nematocyst. Peptide with both antimicrobial and neurotoxin activities. This toxin acts both on ERG potassium channels and sodium channels. It potently and reversibly inhibits human Kv11.1/KCNH2/ERG1 (IC(50)=34 nM), rat Kv11.1/KCNH2/ERG1 and Kv11.3/KCNH7/ERG3 voltage-gated potassium channels in a similar potency. It acts as a gating-modifier toxin that shifts the voltage-dependence of ERG activation in the positive direction and suppresses its current amplitudes elicited by strong depolarizing pulses. On sodium channels, it blocks Nav1.2/SCN2A (EC(50)=31 nM), Nav1.3/SCN3A, Nav1.4/SCN4A, Nav1.5/SCN5A, Nav1.6/SCN8A, Nav1.8/SCN10A (EC(50)=92 nM). It may act by binding at site 1 or close by, only when the pore is in an open configuration. Shows antibacterial activity against the Gram-negative bacterium S.typhimurium, but not on the bacteria B.subtilis, S.aureus, and P.aeruginosa. In vivo, this toxin does not induce neurotoxic symptoms when injected into mice. The protein is Kappa-actitoxin-Ael2a of Anthopleura elegantissima (Green aggregating anemone).